A 345-amino-acid chain; its full sequence is RNA pseudouridine synthase 1 (345 aa).

Residue D134 is part of the active site.

This sequence belongs to the pseudouridine synthase RluA family.

The catalysed reaction is a uridine in RNA = a pseudouridine in RNA. The protein is RNA pseudouridine synthase 1 of Oryza sativa subsp. japonica (Rice).